The following is a 419-amino-acid chain: Equilibrative nucleotide transporter 5 (419 aa).

11 helical membrane-spanning segments follow: residues 20 to 40, 56 to 76, 86 to 106, 108 to 128, 142 to 162, 186 to 206, 265 to 285, 292 to 312, 327 to 347, 354 to 374, and 393 to 413; these read MVVC…LLSV, VLTF…AYNE, LIGY…DLAT, GHGG…FGFA, LMCP…GALT, IFLA…AYVF, YVVN…GFLY, GLGS…DLVG, KGLT…YFTA, WMIL…VCIL, and LVLF…LWLI.

This sequence belongs to the SLC29A/ENT transporter (TC 2.A.57) family.

It is found in the cell membrane. May be involved in nucleoside transport. This is Equilibrative nucleotide transporter 5 (ENT5) from Arabidopsis thaliana (Mouse-ear cress).